Consider the following 439-residue polypeptide: Protein translocase subunit SecY (439 aa).

Transmembrane regions (helical) follow at residues 23-43, 77-97, 125-145, 154-174, 187-207, 217-237, 274-294, 317-337, 369-389, and 397-417; these read IASV…PIPG, IFAL…LLTL, LVLA…ISGM, FYFY…LMWL, ISII…VHTI, ILLF…VVFI, VIPA…ISWF, YLIL…GLVF, IMIR…LIPE, and VPFY…MDFI.

The protein belongs to the SecY/SEC61-alpha family. Component of the Sec protein translocase complex. Heterotrimer consisting of SecY, SecE and SecG subunits. The heterotrimers can form oligomers, although 1 heterotrimer is thought to be able to translocate proteins. Interacts with the ribosome. Interacts with SecDF, and other proteins may be involved. Interacts with SecA.

The protein localises to the cell membrane. The central subunit of the protein translocation channel SecYEG. Consists of two halves formed by TMs 1-5 and 6-10. These two domains form a lateral gate at the front which open onto the bilayer between TMs 2 and 7, and are clamped together by SecE at the back. The channel is closed by both a pore ring composed of hydrophobic SecY resides and a short helix (helix 2A) on the extracellular side of the membrane which forms a plug. The plug probably moves laterally to allow the channel to open. The ring and the pore may move independently. In Buchnera aphidicola subsp. Schizaphis graminum (strain Sg), this protein is Protein translocase subunit SecY.